We begin with the raw amino-acid sequence, 343 residues long: Allergin-1 (343 aa).

An N-terminal signal peptide occupies residues 1 to 19; that stretch reads MWSHLNRLLFWSIFSSVTC. Residues 20–227 are Extracellular-facing; sequence RKAVLDCEAM…GGDSCPFCLK (208 aa). Ig-like C2-type domains are found at residues 35-118 and 128-213; these read PSPC…RDFS and PVLN…HPVT. Asn-51, Asn-60, Asn-89, Asn-151, Asn-157, and Asn-182 each carry an N-linked (GlcNAc...) asparagine glycan. Disulfide bonds link Cys-56–Cys-103 and Cys-147–Cys-196. The helical transmembrane segment at 228–248 threads the bilayer; it reads LLLPGLLLLLVVIILILAFWV. At 249–343 the chain is on the cytoplasmic side; it reads LPKYKTRKAM…SGYVYSELNF (95 aa). Short sequence motifs (ITIM motif) lie at residues 311–316 and 336–341; these read LQYATP and YVYSEL. Phosphotyrosine occurs at positions 313 and 338.

In terms of assembly, monomer. Interacts (tyrosine-phosphorylated) with PTPN6, PTPN11 and INPP5D. In terms of processing, N-glycosylated. In terms of tissue distribution, expressed in myeloid cells (dendritic cells, macrophages and neutrophils, weak expression on B-cells but not in T-cells or natural killer cells), peripheral blood basophils and mast cells (at protein level).

The protein localises to the cell membrane. Its function is as follows. Immunoglobulin-like receptor which plays an inhibitory role in degranulation of mast cells. Negatively regulates IgE-mediated mast cell activation and suppresses the type I immediate hypersensitivity reaction. The protein is Allergin-1 (MILR1) of Homo sapiens (Human).